The following is a 416-amino-acid chain: Squalene synthase (416 aa).

Positions 52 and 77 each coordinate NADP(+). The Mg(2+) site is built by Asp-80, Glu-83, and Asp-84. NADP(+) is bound at residue Arg-218. Residues 284–304 (SVFNFCAIPQVMAIATLAACY) form a helical membrane-spanning segment. Residues Lys-315 and Arg-317 each coordinate NADP(+). Residues 384–404 (PIYLSFIMLLAALSWQYLSTL) traverse the membrane as a helical segment.

This sequence belongs to the phytoene/squalene synthase family. Mg(2+) is required as a cofactor.

It localises to the endoplasmic reticulum membrane. It carries out the reaction 2 (2E,6E)-farnesyl diphosphate + NADPH + H(+) = squalene + 2 diphosphate + NADP(+). It catalyses the reaction 2 (2E,6E)-farnesyl diphosphate + NADH + H(+) = squalene + 2 diphosphate + NAD(+). The enzyme catalyses presqualene diphosphate + NADH + H(+) = squalene + diphosphate + NAD(+). The catalysed reaction is presqualene diphosphate + NADPH + H(+) = squalene + diphosphate + NADP(+). It carries out the reaction 2 (2E,6E)-farnesyl diphosphate = presqualene diphosphate + diphosphate. It participates in terpene metabolism; lanosterol biosynthesis; lanosterol from farnesyl diphosphate: step 1/3. Catalyzes the condensation of 2 farnesyl pyrophosphate (FPP) moieties to form squalene. Proceeds in two distinct steps. In the first half-reaction, two molecules of FPP react to form the stable presqualene diphosphate intermediate (PSQPP), with concomitant release of a proton and a molecule of inorganic diphosphate. In the second half-reaction, PSQPP undergoes heterolysis, isomerization, and reduction with NADPH or NADH to form squalene. It is the first committed enzyme of the sterol biosynthesis pathway. In Mus musculus (Mouse), this protein is Squalene synthase (Fdft1).